Consider the following 293-residue polypeptide: Ethanolamine ammonia-lyase small subunit (293 aa).

Residues Val-207 and Glu-228 each contribute to the adenosylcob(III)alamin site.

This sequence belongs to the EutC family. As to quaternary structure, the basic unit is a heterodimer which dimerizes to form tetramers. The heterotetramers trimerize; 6 large subunits form a core ring with 6 small subunits projecting outwards. Adenosylcob(III)alamin serves as cofactor.

The protein resides in the bacterial microcompartment. It catalyses the reaction ethanolamine = acetaldehyde + NH4(+). Its pathway is amine and polyamine degradation; ethanolamine degradation. Its function is as follows. Catalyzes the deamination of various vicinal amino-alcohols to oxo compounds. Allows this organism to utilize ethanolamine as the sole source of nitrogen and carbon in the presence of external vitamin B12. The polypeptide is Ethanolamine ammonia-lyase small subunit (Listeria innocua serovar 6a (strain ATCC BAA-680 / CLIP 11262)).